Consider the following 540-residue polypeptide: Hydroxylamine reductase (540 aa).

[4Fe-4S] cluster contacts are provided by cysteine 3, cysteine 6, cysteine 15, and cysteine 21. Histidine 236, glutamate 260, cysteine 304, cysteine 395, cysteine 423, cysteine 448, glutamate 483, and lysine 485 together coordinate hybrid [4Fe-2O-2S] cluster. Residue cysteine 395 is modified to Cysteine persulfide.

This sequence belongs to the HCP family. Requires [4Fe-4S] cluster as cofactor. The cofactor is hybrid [4Fe-2O-2S] cluster.

It is found in the cytoplasm. It carries out the reaction A + NH4(+) + H2O = hydroxylamine + AH2 + H(+). Catalyzes the reduction of hydroxylamine to form NH(3) and H(2)O. This chain is Hydroxylamine reductase, found in Methanosarcina mazei (strain ATCC BAA-159 / DSM 3647 / Goe1 / Go1 / JCM 11833 / OCM 88) (Methanosarcina frisia).